The sequence spans 394 residues: Purine ribonucleoside efflux pump NepI (394 aa).

Residues 1–21 (MSEFIAENRGADAITRPNWSA) are Cytoplasmic-facing. Residues 22 to 42 (VFSVAFCVACLIIVEFLPVSL) traverse the membrane as a helical segment. At 43–54 (LTPMAQDLGISE) the chain is on the periplasmic side. Residues 55-75 (GVAGQSVTVTAFVAMFASLFI) form a helical membrane-spanning segment. Residues 76–85 (TQTIQATDRR) are Cytoplasmic-facing. The chain crosses the membrane as a helical span at residues 86–106 (YVVILFAVLLTISCLLVSFAN). Position 107 (Ser107) is a topological domain, periplasmic. A helical membrane pass occupies residues 108-128 (FSLLLIGRACLGLALGGFWAM). At 129–147 (SASLTMRLVPPRTVPKALS) the chain is on the cytoplasmic side. A helical membrane pass occupies residues 148–168 (VIFGAVSIALVIAAPLGSFLG). The Periplasmic portion of the chain corresponds to 169-175 (ELIGWRN). A helical transmembrane segment spans residues 176–196 (VFNAAAVMGVLCIFWIIKSLP). Over 197–215 (SLPGKPSHQKQNTFRLLQR) the chain is Cytoplasmic. A helical transmembrane segment spans residues 216–236 (PGVMAGMIAIFMSFAGQFAFF). At 237–255 (TYIRPVYMNLAGFGVDGLT) the chain is on the periplasmic side. A helical transmembrane segment spans residues 256-276 (LVLLSFGIASFIGTSLSSFIL). Residues 277–281 (KRSVK) lie on the Cytoplasmic side of the membrane. The helical transmembrane segment at 282–302 (LALAGAPLILAVSALVLTLCG) threads the bilayer. At 303–305 (SDK) the chain is on the periplasmic side. A helical membrane pass occupies residues 306 to 326 (IVATGVAIIWGLTFALVPVGW). Residues 327-343 (STWSTRSLADQAEKAGS) lie on the Cytoplasmic side of the membrane. Residues 344-364 (IQVAVIQLANTCGAAIGGYAL) form a helical membrane-spanning segment. The Periplasmic portion of the chain corresponds to 365-366 (DN). The chain crosses the membrane as a helical span at residues 367-387 (IGLTSPLMLSGTLMLLTALLV). Residues 388–394 (TAKVKMK) are Cytoplasmic-facing.

The protein belongs to the major facilitator superfamily. DHA1 family. NepI (TC 2.A.1.2.26) subfamily.

Its subcellular location is the cell inner membrane. It catalyses the reaction inosine(in) + H(+)(out) = inosine(out) + H(+)(in). It carries out the reaction guanosine(in) + H(+)(out) = guanosine(out) + H(+)(in). In terms of biological role, involved in the efflux of purine ribonucleosides, such as inosine and guanosine. The protein is Purine ribonucleoside efflux pump NepI of Shigella dysenteriae serotype 1 (strain Sd197).